A 174-amino-acid chain; its full sequence is Endoribonuclease YbeY (174 aa).

3 residues coordinate Zn(2+): His129, His133, and His139.

It belongs to the endoribonuclease YbeY family. It depends on Zn(2+) as a cofactor.

It is found in the cytoplasm. Functionally, single strand-specific metallo-endoribonuclease involved in late-stage 70S ribosome quality control and in maturation of the 3' terminus of the 16S rRNA. This chain is Endoribonuclease YbeY, found in Lactobacillus delbrueckii subsp. bulgaricus (strain ATCC BAA-365 / Lb-18).